Reading from the N-terminus, the 381-residue chain is Actin-binding Rho-activating protein (381 aa).

2 disordered regions span residues 39 to 156 (ENSI…SHGS) and 179 to 207 (QEEPTWRSDSVDTEDSGYGGEAEERPEQD). Residues 69–79 (PTSHQKAQSAP) show a composition bias toward polar residues. Basic and acidic residues predominate over residues 97–110 (KAPEVSHIKKKEVS). Phosphoserine is present on residues serine 156 and serine 188. Basic and acidic residues predominate over residues 179–188 (QEEPTWRSDS). Actin-binding regions lie at residues 199 to 299 (EAEE…AERA) and 300 to 381 (KRAE…TLLK). 2 interaction with actin regions span residues 240–285 (SPVG…GDEG) and 352–381 (MRARKHGLVDFEGEMLWQGRDDHVVITLLK).

As to quaternary structure, binds F-actin and ABLIM1, ABLIM2 and ABLIM3. Interaction with ABLIM2 and ABLIM3 enhances activity.

It localises to the cytoplasm. The protein localises to the myofibril. The protein resides in the sarcomere. It is found in the cytoskeleton. Acts as an activator of serum response factor (SRF)-dependent transcription possibly by inducing nuclear translocation of MKL1 or MKL2 and through a mechanism requiring Rho-actin signaling. The chain is Actin-binding Rho-activating protein from Homo sapiens (Human).